We begin with the raw amino-acid sequence, 291 residues long: Nucleotide-binding protein Athe_0320 (291 aa).

Position 9–16 (9–16 (GMSGAGKS)) interacts with ATP. Position 60–63 (60–63 (DIRG)) interacts with GTP.

This sequence belongs to the RapZ-like family.

In terms of biological role, displays ATPase and GTPase activities. This Caldicellulosiruptor bescii (strain ATCC BAA-1888 / DSM 6725 / KCTC 15123 / Z-1320) (Anaerocellum thermophilum) protein is Nucleotide-binding protein Athe_0320.